A 364-amino-acid polypeptide reads, in one-letter code: tRNA-specific 2-thiouridylase MnmA 2 (364 aa).

ATP-binding positions include 10–17 (GMSGGVDS) and M36. C106 serves as the catalytic Nucleophile. Cysteines 106 and 204 form a disulfide. An ATP-binding site is contributed by G130. The interval 154-156 (KDQ) is interaction with tRNA. The active-site Cysteine persulfide intermediate is C204. The tract at residues 310-311 (RY) is interaction with tRNA.

It belongs to the MnmA/TRMU family.

The protein localises to the cytoplasm. The enzyme catalyses S-sulfanyl-L-cysteinyl-[protein] + uridine(34) in tRNA + AH2 + ATP = 2-thiouridine(34) in tRNA + L-cysteinyl-[protein] + A + AMP + diphosphate + H(+). Catalyzes the 2-thiolation of uridine at the wobble position (U34) of tRNA, leading to the formation of s(2)U34. This chain is tRNA-specific 2-thiouridylase MnmA 2, found in Caldanaerobacter subterraneus subsp. tengcongensis (strain DSM 15242 / JCM 11007 / NBRC 100824 / MB4) (Thermoanaerobacter tengcongensis).